The primary structure comprises 77 residues: UPF0154 protein LCK_00994 (77 aa).

A helical transmembrane segment spans residues F5–A25. Residues S50–K77 form a disordered region.

It belongs to the UPF0154 family.

It localises to the cell membrane. This is UPF0154 protein LCK_00994 from Leuconostoc citreum (strain KM20).